Here is a 586-residue protein sequence, read N- to C-terminus: Protein cereblon (586 aa).

Disordered stretches follow at residues 1-114 (MDDE…LPRW) and 158-194 (SQER…IDIG). The span at 14–37 (GRDEDVQLEDHSQAQGLQDRRVDA) shows a compositional bias: basic and acidic residues. A compositionally biased stretch (acidic residues) spans 75–85 (MVEDGLQDDTA). Positions 86 to 96 (SEGSHPSSDMS) are enriched in polar residues. Over residues 159–168 (QERRRSRTSE) the composition is skewed to basic and acidic residues. Residues 170–179 (TSQEDVEQPE) show a composition bias toward acidic residues. Residues 180–190 (DPPPQQPPRPP) show a composition bias toward pro residues. The Lon N-terminal domain occupies 226-452 (HMLIFLHQHI…LIKSTFTDES (227 aa)). The region spanning 451–560 (ESLFFCRYCN…LAGSSVRIGK (110 aa)) is the CULT domain. Zn(2+)-binding residues include C456, C459, C525, and C528.

The protein belongs to the CRBN family. In terms of assembly, likely a component of a DCX (DDB1-CUL4-X-box) protein ligase complex. May interact with pic/DDB1. In terms of processing, ubiquitinated.

Its subcellular location is the nucleus. Its pathway is protein modification; protein ubiquitination. In terms of biological role, substrate recognition component of a DCX (DDB1-CUL4-X-box) E3 protein ligase complex that mediates the ubiquitination and subsequent proteasomal degradation of target proteins. Has an essential role in mediating growth by negatively regulating insulin signaling. It also has a role in maintaining presynaptic function in the neuromuscular junction synapses of third-instar larvae. The protein is Protein cereblon of Drosophila erecta (Fruit fly).